A 311-amino-acid chain; its full sequence is Urease accessory protein UreD 3 (311 aa).

Belongs to the UreD family. In terms of assembly, ureD, UreF and UreG form a complex that acts as a GTP-hydrolysis-dependent molecular chaperone, activating the urease apoprotein by helping to assemble the nickel containing metallocenter of UreC. The UreE protein probably delivers the nickel.

The protein resides in the cytoplasm. Required for maturation of urease via the functional incorporation of the urease nickel metallocenter. This Methylorubrum populi (strain ATCC BAA-705 / NCIMB 13946 / BJ001) (Methylobacterium populi) protein is Urease accessory protein UreD 3.